The sequence spans 312 residues: DNA-directed RNA polymerase subunit alpha (312 aa).

Residues 1–229 are alpha N-terminal domain (alpha-NTD); that stretch reads MLQYQIDRIE…ELFQPLATVT (229 aa). An alpha C-terminal domain (alpha-CTD) region spans residues 239–312; it reads EPSAEAQIPL…ISIPQSRTSA (74 aa).

The protein belongs to the RNA polymerase alpha chain family. In cyanobacteria the RNAP catalytic core is composed of 2 alpha, 1 beta, 1 beta', 1 gamma and 1 omega subunit. When a sigma factor is associated with the core the holoenzyme is formed, which can initiate transcription.

It carries out the reaction RNA(n) + a ribonucleoside 5'-triphosphate = RNA(n+1) + diphosphate. DNA-dependent RNA polymerase catalyzes the transcription of DNA into RNA using the four ribonucleoside triphosphates as substrates. The polypeptide is DNA-directed RNA polymerase subunit alpha (Synechococcus sp. (strain CC9605)).